We begin with the raw amino-acid sequence, 775 residues long: Endothelin-converting enzyme-like 1 (775 aa).

Topologically, residues 1-61 (MEAPYSMTAH…LPRWNRREVC (61 aa)) are cytoplasmic. Residues 30–52 (GTSLPPGFPRGSGRSASGSRSGL) are disordered. A compositionally biased stretch (low complexity) spans 32–52 (SLPPGFPRGSGRSASGSRSGL). Residues 62 to 82 (LLSGLVFAAGLCAILAAMLAL) traverse the membrane as a helical; Signal-anchor for type II membrane protein segment. The Lumenal segment spans residues 83 to 775 (KYLGPGAAGG…MNPVHKCSVW (693 aa)). A Peptidase M13 domain is found at 99–775 (GCPERKAFAR…MNPVHKCSVW (677 aa)). Cystine bridges form between Cys124-Cys760, Cys132-Cys720, Cys188-Cys441, and Cys649-Cys772. N-linked (GlcNAc...) asparagine glycans are attached at residues Asn255 and Asn322. His612 is a Zn(2+) binding site. The active site involves Glu613. Residue His616 participates in Zn(2+) binding. Asn656 carries N-linked (GlcNAc...) asparagine glycosylation. Glu672 lines the Zn(2+) pocket. The Proton donor role is filled by Asp676.

This sequence belongs to the peptidase M13 family. It depends on Zn(2+) as a cofactor.

Its subcellular location is the membrane. Functionally, may contribute to the degradation of peptide hormones and be involved in the inactivation of neuronal peptides. The protein is Endothelin-converting enzyme-like 1 (Ecel1) of Mus musculus (Mouse).